Reading from the N-terminus, the 678-residue chain is Probable N-methylproline demethylase (678 aa).

Residues G59, Q102, R220, K299, and 321 to 322 each bind FMN; that span reads TR. [4Fe-4S] cluster is bound by residues C345, C351, and C363. The FAD site is built by A396, E415, Q423, R433, and A460.

The protein in the N-terminal section; belongs to the NADH:flavin oxidoreductase/NADH oxidase family. The cofactor is FMN. Requires FAD as cofactor. It depends on [4Fe-4S] cluster as a cofactor.

It catalyses the reaction N-methyl-L-proline + NAD(+) + H2O = L-proline + formaldehyde + NADH + H(+). Its pathway is amine and polyamine degradation; stachydrine degradation. Its function is as follows. Possible NADH-dependent oxidase, may function as a demethylase that converts N-methylproline to proline. The chain is Probable N-methylproline demethylase from Rhizobium meliloti (strain 1021) (Ensifer meliloti).